The chain runs to 77 residues: Delta/omega-plectoxin-Pt1a (77 aa).

The first 20 residues, 1–20 (MKHLIVAVVLLSALAICTSA), serve as a signal peptide directing secretion. The propeptide occupies 21–34 (EEEQVNVPFRPEER). Disulfide bonds link Cys-38–Cys-51, Cys-45–Cys-57, Cys-50–Cys-67, Cys-54–Cys-74, and Cys-59–Cys-65. The O-palmitoyl serine moiety is linked to residue Ser-73. Cys-74 carries the post-translational modification Cysteine amide.

The protein belongs to the neurotoxin 02 (plectoxin) family. 01 (Tx3) subfamily. In terms of tissue distribution, expressed by the venom gland.

It localises to the secreted. Functionally, excitatory toxin that acts on both calcium and sodium (Nav) channels. It preferentially blocks a subset of calcium channels that is apparently not required for neurotransmitter release, it decreases threshold for sodium channel activation and it slows sodium channel inactivation. As it enhances synaptic transmission by prolonging presynaptic release of neurotransmitter, its effects on sodium and calcium channels may act synergistically to sustain the terminal excitability. The protein is Delta/omega-plectoxin-Pt1a of Plectreurys tristis (Spider).